A 168-amino-acid polypeptide reads, in one-letter code: S-ribosylhomocysteine lyase (168 aa).

Fe cation is bound by residues H54, H58, and C128.

Belongs to the LuxS family. Homodimer. It depends on Fe cation as a cofactor.

It carries out the reaction S-(5-deoxy-D-ribos-5-yl)-L-homocysteine = (S)-4,5-dihydroxypentane-2,3-dione + L-homocysteine. In terms of biological role, involved in the synthesis of autoinducer 2 (AI-2) which is secreted by bacteria and is used to communicate both the cell density and the metabolic potential of the environment. The regulation of gene expression in response to changes in cell density is called quorum sensing. Catalyzes the transformation of S-ribosylhomocysteine (RHC) to homocysteine (HC) and 4,5-dihydroxy-2,3-pentadione (DPD). The chain is S-ribosylhomocysteine lyase from Neisseria gonorrhoeae (strain ATCC 700825 / FA 1090).